A 165-amino-acid polypeptide reads, in one-letter code: Endoribonuclease YbeY (165 aa).

Zn(2+) is bound by residues His119, His123, and His129.

The protein belongs to the endoribonuclease YbeY family. Requires Zn(2+) as cofactor.

Its subcellular location is the cytoplasm. Its function is as follows. Single strand-specific metallo-endoribonuclease involved in late-stage 70S ribosome quality control and in maturation of the 3' terminus of the 16S rRNA. In Streptomyces coelicolor (strain ATCC BAA-471 / A3(2) / M145), this protein is Endoribonuclease YbeY.